The sequence spans 633 residues: Beta-myrcene synthase TPS15CT (633 aa).

A chloroplast-targeting transit peptide spans 1-55 (MHCMAVHQFSPSIVSSLPTISTYNNNHFCRFFTPKTSISPISKTKSKSSTCYPIQ). (2E)-geranyl diphosphate is bound by residues Arg344, Asp381, Asp385, Arg525, and Asp528. Positions 381 and 385 each coordinate Mg(2+). The short motif at 381–385 (DDIYD) is the DDXXD motif element. The Mg(2+) site is built by Asp528, Thr532, and Glu536.

The protein belongs to the terpene synthase family. Tpsb subfamily. Mg(2+) is required as a cofactor. The cofactor is Mn(2+).

The protein resides in the plastid. It localises to the chloroplast. It catalyses the reaction (2E)-geranyl diphosphate = beta-myrcene + diphosphate. Its pathway is secondary metabolite biosynthesis; terpenoid biosynthesis. In terms of biological role, involved in monoterpene (C10) olefins biosynthesis, constituants of cannabinoids and terpenoids-rich resins. Catalyzes strictly the conversion of (2E)-geranyl diphosphate to beta-myrcene. This Cannabis sativa (Hemp) protein is Beta-myrcene synthase TPS15CT.